The primary structure comprises 324 residues: Acetyl-coenzyme A carboxylase carboxyl transferase subunit alpha (324 aa).

The region spanning 44–298 (QLEAKATQLR…KTAIVKSLDD (255 aa)) is the CoA carboxyltransferase C-terminal domain.

This sequence belongs to the AccA family. In terms of assembly, acetyl-CoA carboxylase is a heterohexamer composed of biotin carboxyl carrier protein (AccB), biotin carboxylase (AccC) and two subunits each of ACCase subunit alpha (AccA) and ACCase subunit beta (AccD).

The protein resides in the cytoplasm. The catalysed reaction is N(6)-carboxybiotinyl-L-lysyl-[protein] + acetyl-CoA = N(6)-biotinyl-L-lysyl-[protein] + malonyl-CoA. It participates in lipid metabolism; malonyl-CoA biosynthesis; malonyl-CoA from acetyl-CoA: step 1/1. Functionally, component of the acetyl coenzyme A carboxylase (ACC) complex. First, biotin carboxylase catalyzes the carboxylation of biotin on its carrier protein (BCCP) and then the CO(2) group is transferred by the carboxyltransferase to acetyl-CoA to form malonyl-CoA. This Trichodesmium erythraeum (strain IMS101) protein is Acetyl-coenzyme A carboxylase carboxyl transferase subunit alpha.